The primary structure comprises 371 residues: Serpentine receptor class delta-1 (371 aa).

7 consecutive transmembrane segments (helical) span residues 31-51, 62-82, 109-129, 148-168, 209-229, 267-287, and 295-315; these read LSEVICGFGIVLNLLLIYVIF, AVLLFNFAIFDLLTCVASLLA, CFFCHCFVCHAMAHSQWILLI, MIVIVSLFYAMSAVIFLFYFW, IPSLIAIFYMTMPCVPIYFII, AIPIFWLVASGIFTLAEFGII, and ITFRLMDCIPSSSPLVAFIFI. The segment at 344–371 is disordered; the sequence is EKFNQPPKQPTNPAQQSANNDAAKTEKV. Polar residues predominate over residues 354–365; that stretch reads TNPAQQSANNDA.

It belongs to the nematode receptor-like protein srd family.

The protein resides in the membrane. In Caenorhabditis elegans, this protein is Serpentine receptor class delta-1 (srd-1).